Here is a 511-residue protein sequence, read N- to C-terminus: Sorting nexin MVP1 (511 aa).

The disordered stretch occupies residues 1 to 36 (MDNYEGSDPWNTSSNAWTKDDDHVVSTTNSEPSLNG). The segment covering 25 to 36 (VSTTNSEPSLNG) has biased composition (polar residues). Residues 128 to 247 (DADIIIIEEI…TFLTVRTDLT (120 aa)) enclose the PX domain. 4 residues coordinate a 1,2-diacyl-sn-glycero-3-phospho-(1D-myo-inositol-3-phosphate): Arg-172, Ser-174, Lys-198, and Arg-213.

Belongs to the sorting nexin family. Homodimer. Forms an autoinhibited tetramer consisting of 2 homodimers that self-interact, wherein the membrane-interacting BAR surfaces are sequestered and the PX lipid-binding sites are occluded. Interacts with VPS1.

It localises to the cytoplasm. The protein localises to the endosome membrane. In terms of biological role, required for vacuolar protein sorting. Component of the retromer-mediated endosome-to-Golgi retrograde pathway. Required for efficient cargo export from the endosome, promoting VPS1-mediated fission of retromer-coated tubules that bud from the endosome. This chain is Sorting nexin MVP1 (MVP1), found in Saccharomyces cerevisiae (strain ATCC 204508 / S288c) (Baker's yeast).